Consider the following 385-residue polypeptide: Protein pelota homolog (385 aa).

A Glycyl lysine isopeptide (Lys-Gly) (interchain with G-Cter in SUMO2) cross-link involves residue Lys162. 4 positions are modified to phosphoserine: Ser374, Ser380, Ser381, and Ser382.

This sequence belongs to the eukaryotic release factor 1 family. Pelota subfamily. In terms of assembly, component of the Pelota-HBS1L complex, also named Dom34-Hbs1 complex, composed of PELO and HBS1L. Interacts with PINK1. Interacts with ABCE1. Interacts with CNOT4. The cofactor is a divalent metal cation.

The protein resides in the cytoplasm. Its function is as follows. Component of the Pelota-HBS1L complex, a complex that recognizes stalled ribosomes and triggers the No-Go Decay (NGD) pathway. In the Pelota-HBS1L complex, PELO recognizes ribosomes stalled at the 3' end of an mRNA and engages stalled ribosomes by destabilizing mRNA in the mRNA channel. Following mRNA extraction from stalled ribosomes by the SKI complex, the Pelota-HBS1L complex promotes recruitment of ABCE1, which drives the disassembly of stalled ribosomes, followed by degradation of damaged mRNAs as part of the NGD pathway. As part of the PINK1-regulated signaling, upon mitochondrial damage is recruited to the ribosome/mRNA-ribonucleoprotein complex associated to mitochondrial outer membrane thereby enabling the recruitment of autophagy receptors and induction of mitophagy. This Bos taurus (Bovine) protein is Protein pelota homolog (PELO).